The sequence spans 313 residues: Adhesin MafA 2 (313 aa).

The signal sequence occupies residues 1–14 (MKTLLLLIPLVLTA). Residue C15 is the site of N-palmitoyl cysteine attachment. A lipid anchor (S-diacylglycerol cysteine) is attached at C15. Residues 282–297 (GDTTAQNRPDFKQNNG) are compositionally biased toward polar residues. The segment at 282 to 313 (GDTTAQNRPDFKQNNGKKPDVGNEVIRRRKGG) is disordered.

This sequence belongs to the MafA family.

It is found in the cell outer membrane. This Neisseria meningitidis serogroup C / serotype 2a (strain ATCC 700532 / DSM 15464 / FAM18) protein is Adhesin MafA 2 (mafA2).